We begin with the raw amino-acid sequence, 155 residues long: SsrA-binding protein (155 aa).

It belongs to the SmpB family.

It is found in the cytoplasm. In terms of biological role, required for rescue of stalled ribosomes mediated by trans-translation. Binds to transfer-messenger RNA (tmRNA), required for stable association of tmRNA with ribosomes. tmRNA and SmpB together mimic tRNA shape, replacing the anticodon stem-loop with SmpB. tmRNA is encoded by the ssrA gene; the 2 termini fold to resemble tRNA(Ala) and it encodes a 'tag peptide', a short internal open reading frame. During trans-translation Ala-aminoacylated tmRNA acts like a tRNA, entering the A-site of stalled ribosomes, displacing the stalled mRNA. The ribosome then switches to translate the ORF on the tmRNA; the nascent peptide is terminated with the 'tag peptide' encoded by the tmRNA and targeted for degradation. The ribosome is freed to recommence translation, which seems to be the essential function of trans-translation. This chain is SsrA-binding protein, found in Streptococcus pyogenes serotype M18 (strain MGAS8232).